We begin with the raw amino-acid sequence, 318 residues long: MSTVFIDRKDIEIRVDGNSISFYAKGKKDGSLPLSPLKRVVIVGNVKIETSVLYKLVNHGITVLFLTGKLKYSGILNGPLHNNGLLRVKQYQKSLSGFSLKFAKELIKRKIVSQRDFLSEIREIKKALAMQADRAIEILNKAISNIEVTPISIDSLRGIEGAASSIYFITYSKIFPNSLKFVRRIKRPPKDPVNAMLSLCYTLLHYEIVREIQLIGLDPTIGFYHQFEYGRESLACDLVELFRVNVDRFVYELFKAKHLGNRDFMKDEESGGVYLKKTGRKKFYPLYEQWVQQQRTIWRGEVQGFARRILEEKDIISG.

E160, H225, and E240 together coordinate Mn(2+).

The protein belongs to the CRISPR-associated endonuclease Cas1 family. As to quaternary structure, homodimer, forms a heterotetramer with a Cas2 homodimer. Mg(2+) serves as cofactor. The cofactor is Mn(2+).

In terms of biological role, CRISPR (clustered regularly interspaced short palindromic repeat), is an adaptive immune system that provides protection against mobile genetic elements (viruses, transposable elements and conjugative plasmids). CRISPR clusters contain spacers, sequences complementary to antecedent mobile elements, and target invading nucleic acids. CRISPR clusters are transcribed and processed into CRISPR RNA (crRNA). Acts as a dsDNA endonuclease. Involved in the integration of spacer DNA into the CRISPR cassette. The protein is CRISPR-associated endonuclease Cas1 1 of Thermodesulfovibrio yellowstonii (strain ATCC 51303 / DSM 11347 / YP87).